A 292-amino-acid polypeptide reads, in one-letter code: Glycine--tRNA ligase alpha subunit (292 aa).

It belongs to the class-II aminoacyl-tRNA synthetase family. In terms of assembly, tetramer of two alpha and two beta subunits.

It localises to the cytoplasm. The catalysed reaction is tRNA(Gly) + glycine + ATP = glycyl-tRNA(Gly) + AMP + diphosphate. The protein is Glycine--tRNA ligase alpha subunit of Pelotomaculum thermopropionicum (strain DSM 13744 / JCM 10971 / SI).